The following is a 308-amino-acid chain: Adipolin (308 aa).

The first 21 residues, 1 to 21, serve as a signal peptide directing secretion; that stretch reads MWAWGWAAAALLWLQTAGAGA. Residues 36 to 119 are disordered; the sequence is DSPNITTSNR…PPGSPGVGVT (84 aa). An N-linked (GlcNAc...) asparagine glycan is attached at asparagine 39. A compositionally biased stretch (basic residues) spans 82-93; sequence RKRCRGRDKKSR. The span at 99-113 shows a compositional bias: pro residues; sequence PGPPGPPGPPGPPGS. The region spanning 153–308 is the C1q domain; sequence QRLVVEAFYC…SSFSGMLLGT (156 aa).

The protein belongs to the adipolin/erythroferrone family. In terms of assembly, homomultimer; disulfide-linked. Adipolin fC1QTNF12: homotrimer; disulfide-linked. Adipolin gC1QTNF12: homodimer; disulfide-linked. May interact with ERFE. Processed into Adipolin fC1QTNF12 and Adipolin gC1QTNF12 by FURIN. Insulin enhances endogenous C1QTNF12 cleavage. In terms of tissue distribution, widely expressed, with high expression in subcutaneous and epididymal white adipose tissues and brown adipose tissue. Expressed in adipocytes (at protein level).

The protein resides in the secreted. Its function is as follows. Insulin-sensitizing adipocyte-secreted protein (adipokine) that regulates glucose metabolism in liver and adipose tissue. Promotes glucose uptake in adipocytes and suppresses de novo glucose production in hepatocytes via the PI3K-Akt signaling pathway. Administration lead to reduction of blood glucose. Able to attenuate inflammation in fat tissue. In terms of biological role, acts by activating the Akt signaling in hepatocytes and adipocytes. Not able to increase insulin-stimulated glucose uptake in adipocytes. Functionally, acts by activating the MAP kinase. Increases insulin-stimulated glucose uptake in adipocytes. The polypeptide is Adipolin (C1qtnf12) (Mus musculus (Mouse)).